Here is a 184-residue protein sequence, read N- to C-terminus: Latex serine proteinase inhibitor (184 aa).

C45 and C89 form a disulfide bridge. N-linked (GlcNAc...) asparagine glycosylation is found at N84 and N90. C142 and C153 are oxidised to a cystine.

It belongs to the protease inhibitor I3 (leguminous Kunitz-type inhibitor) family.

It localises to the secreted. The protein localises to the extracellular space. The sequence is that of Latex serine proteinase inhibitor from Carica papaya (Papaya).